The chain runs to 414 residues: Cytochrome P450 GfsF (414 aa).

The segment at 1-32 (MTDTTLVEAGDPAEDAPEWPMKRDTGCPFDPP) is disordered. Residues H75, H107, R111, R303, H361, and C363 each contribute to the heme b site.

The protein belongs to the cytochrome P450 family. As to quaternary structure, monomer. The cofactor is heme b.

The protein operates within antibiotic biosynthesis. Functionally, involved in the synthesis of the 16-membered macrolide antibiotics FD-891 and FD-892. Consecutively catalyzes epoxidation of C8-C9 and then hydroxylation at C10 to convert 25-O-methyl-FD-892 to FD-891. Consecutively catalyzes epoxidation of C8-C9 and then hydroxylation at C10 to convert 8,9-epoxy-FD-892 to 25-O-demethyl-FD-891 as well as converting 25-oxo-FD-892 to 8,9-epoxy-25-oxo-FD-892 and 8,9-epoxy-10-hydroxy-25-oxo-FD-892. In vitro is furnished with P.putida putidaredoxin and putidaredoxin reductase to provide the required two-electron reduction. This is Cytochrome P450 GfsF from Streptomyces halstedii.